The chain runs to 707 residues: Protein O-mannosyl-transferase TMEM260 (707 aa).

Transmembrane regions (helical) follow at residues 28–48 (GGVA…PPSV), 71–91 (YPLF…GSIA), 94–114 (VNLL…FTVF), 141–161 (IAAE…ALTV), 189–209 (NQHT…FQLL), 222–242 (LSLY…SSYL), 318–338 (NPSL…FFAW), and 356–376 (FWMQ…AAVV). Residues 377–707 (SETNRVLNSN…LQSLRNRKNV (331 aa)) lie on the Lumenal side of the membrane. N-linked (GlcNAc...) asparagine glycans are attached at residues Asn407, Asn535, and Asn568.

This sequence belongs to the glycosyltransferase 117 (GT117) family. As to expression, expressed in brain, heart, kidney, liver, lung, pancreas and placenta but are not detected in skeletal muscle.

The protein localises to the endoplasmic reticulum membrane. Its subcellular location is the membrane. The enzyme catalyses a di-trans,poly-cis-dolichyl beta-D-mannosyl phosphate + L-seryl-[protein] = 3-O-(alpha-D-mannosyl)-L-seryl-[protein] + a di-trans,poly-cis-dolichyl phosphate + H(+). The catalysed reaction is a di-trans,poly-cis-dolichyl beta-D-mannosyl phosphate + L-threonyl-[protein] = 3-O-(alpha-D-mannosyl)-L-threonyl-[protein] + a di-trans,poly-cis-dolichyl phosphate + H(+). Its function is as follows. O-mannosyl-transferase that transfers mannosyl residues to the hydroxyl group of serine or threonine residues of proteins. Specifically glycosylates the IPT/TIG domain of target proteins, such as MET and MST1R/RON. TMEM260-mediated O-mannosylated residues are composed of single mannose glycans that are not elongated or modified. In Homo sapiens (Human), this protein is Protein O-mannosyl-transferase TMEM260.